The following is a 135-amino-acid chain: Transcription antitermination protein NusB (135 aa).

Belongs to the NusB family.

Its function is as follows. Involved in transcription antitermination. Required for transcription of ribosomal RNA (rRNA) genes. Binds specifically to the boxA antiterminator sequence of the ribosomal RNA (rrn) operons. In Clostridium acetobutylicum (strain ATCC 824 / DSM 792 / JCM 1419 / IAM 19013 / LMG 5710 / NBRC 13948 / NRRL B-527 / VKM B-1787 / 2291 / W), this protein is Transcription antitermination protein NusB.